Reading from the N-terminus, the 303-residue chain is ATP-dependent (S)-NAD(P)H-hydrate dehydratase (303 aa).

One can recognise a YjeF C-terminal domain in the interval 12-299 (QQQLVCSVIP…AEVRTAFSML (288 aa)). (6S)-NADPHX contacts are provided by residues Gly-106 and 158-164 (NAVELDR). ATP is bound by residues 194–198 (KGSED) and 213–222 (GSPRRCGGQG). Position 223 (Asp-223) interacts with (6S)-NADPHX.

It belongs to the NnrD/CARKD family. Mg(2+) serves as cofactor.

The catalysed reaction is (6S)-NADHX + ATP = ADP + phosphate + NADH + H(+). It catalyses the reaction (6S)-NADPHX + ATP = ADP + phosphate + NADPH + H(+). In terms of biological role, catalyzes the dehydration of the S-form of NAD(P)HX at the expense of ATP, which is converted to ADP. Together with NAD(P)HX epimerase, which catalyzes the epimerization of the S- and R-forms, the enzyme allows the repair of both epimers of NAD(P)HX, a damaged form of NAD(P)H that is a result of enzymatic or heat-dependent hydration. The sequence is that of ATP-dependent (S)-NAD(P)H-hydrate dehydratase from Ixodes scapularis (Black-legged tick).